A 777-amino-acid polypeptide reads, in one-letter code: Polyribonucleotide nucleotidyltransferase (777 aa).

Mg(2+)-binding residues include D494 and D500. Residues 561-620 form the KH domain; sequence PRIITLQIDPSKIGALIGPGGKTIRSIIEQTGAQIDVEDDGRVFVTTPDADGARMAQSLI. An S1 motif domain is found at 630–699; that stretch reads GEIFTGKVVR…GTGKLSLSRR (70 aa). A disordered region spans residues 703–777; the sequence is TGETAEQRKS…NDRRGGGFRG (75 aa). Gly residues predominate over residues 718 to 727; that stretch reads GPRGGGGGGD. 2 stretches are compositionally biased toward basic and acidic residues: residues 728–761 and 768–777; these read RGPR…DRGP and NDRRGGGFRG.

The protein belongs to the polyribonucleotide nucleotidyltransferase family. Mg(2+) serves as cofactor.

It localises to the cytoplasm. The enzyme catalyses RNA(n+1) + phosphate = RNA(n) + a ribonucleoside 5'-diphosphate. In terms of biological role, involved in mRNA degradation. Catalyzes the phosphorolysis of single-stranded polyribonucleotides processively in the 3'- to 5'-direction. This Herpetosiphon aurantiacus (strain ATCC 23779 / DSM 785 / 114-95) protein is Polyribonucleotide nucleotidyltransferase.